A 377-amino-acid polypeptide reads, in one-letter code: MELRQRQTQSLYRYRRVLEGPQGAELQMDGRRILAFCSNDYLGLANHPATRAAFMQGVREYGVGSGAAHLVTGHSRAHHTLEEALAAFVGRPRVLLFSTGYSANLGVISALIGRQDAVFEDRLNHASLLDGGLLAGARFKRYRHRDYQSLEAALTATKARRRLVVTDGVFSMDGALAPLPDLAAVADRFDAWLMVDDAHGLGVLGEEGRGSVAHFGLGMAQAPILVGTLGKALGTFGAFVAGEEALIETLIQQARTYIYTTAPPSAVAVATLASLRLVETESWRRDKLTRLIAQFRQGAAQLGLQLVDSPTPIQPLLVGDAGAAVKLSERLLAQGILVTAIRPPTVPEGSARLRITLTAAHSEAQVARLLESLVQVL.

Arginine 13 contacts substrate. Pyridoxal 5'-phosphate is bound at residue glycine 100–tyrosine 101. Histidine 125 contacts substrate. Pyridoxal 5'-phosphate is bound by residues serine 171, histidine 199, and threonine 228. Lysine 231 carries the post-translational modification N6-(pyridoxal phosphate)lysine. Threonine 345 lines the substrate pocket.

Belongs to the class-II pyridoxal-phosphate-dependent aminotransferase family. BioF subfamily. In terms of assembly, homodimer. Pyridoxal 5'-phosphate serves as cofactor.

It catalyses the reaction 6-carboxyhexanoyl-[ACP] + L-alanine + H(+) = (8S)-8-amino-7-oxononanoate + holo-[ACP] + CO2. The protein operates within cofactor biosynthesis; biotin biosynthesis. In terms of biological role, catalyzes the decarboxylative condensation of pimeloyl-[acyl-carrier protein] and L-alanine to produce 8-amino-7-oxononanoate (AON), [acyl-carrier protein], and carbon dioxide. The polypeptide is 8-amino-7-oxononanoate synthase (Nitrosococcus oceani (strain ATCC 19707 / BCRC 17464 / JCM 30415 / NCIMB 11848 / C-107)).